The sequence spans 397 residues: Phosphoglycerate kinase (397 aa).

Substrate is bound by residues 21 to 23 (DVN), R36, 59 to 62 (HFGR), R119, and R152. ATP is bound by residues K202, E324, and 354–357 (GGDT).

It belongs to the phosphoglycerate kinase family. As to quaternary structure, monomer.

It is found in the cytoplasm. The catalysed reaction is (2R)-3-phosphoglycerate + ATP = (2R)-3-phospho-glyceroyl phosphate + ADP. It functions in the pathway carbohydrate degradation; glycolysis; pyruvate from D-glyceraldehyde 3-phosphate: step 2/5. The chain is Phosphoglycerate kinase from Cereibacter sphaeroides (strain ATCC 17025 / ATH 2.4.3) (Rhodobacter sphaeroides).